We begin with the raw amino-acid sequence, 59 residues long: MANTVKVTLIKSVSGRIPNHKLCVKGLGLRRIGHTVEVQDTPENRGMINKAYYMLRVEG.

Belongs to the universal ribosomal protein uL30 family. As to quaternary structure, part of the 50S ribosomal subunit.

This Stutzerimonas stutzeri (strain A1501) (Pseudomonas stutzeri) protein is Large ribosomal subunit protein uL30.